Consider the following 32-residue polypeptide: Photosystem II reaction center protein T (32 aa).

A helical transmembrane segment spans residues 3–23 (ALVYVFLLIGTLMIIFFAIFF).

This sequence belongs to the PsbT family. In terms of assembly, PSII is composed of 1 copy each of membrane proteins PsbA, PsbB, PsbC, PsbD, PsbE, PsbF, PsbH, PsbI, PsbJ, PsbK, PsbL, PsbM, PsbT, PsbY, PsbZ, Psb30/Ycf12, at least 3 peripheral proteins of the oxygen-evolving complex and a large number of cofactors. It forms dimeric complexes.

The protein localises to the plastid. Its subcellular location is the chloroplast thylakoid membrane. Functionally, found at the monomer-monomer interface of the photosystem II (PS II) dimer, plays a role in assembly and dimerization of PSII. PSII is a light-driven water plastoquinone oxidoreductase, using light energy to abstract electrons from H(2)O, generating a proton gradient subsequently used for ATP formation. The chain is Photosystem II reaction center protein T from Cyanidioschyzon merolae (strain NIES-3377 / 10D) (Unicellular red alga).